A 672-amino-acid polypeptide reads, in one-letter code: Cytadherence high molecular weight protein 3 (672 aa).

25 tandem repeats follow at residues 98–100 (YDQ), 106–108 (YDQ), 160–162 (PVV), 197–199 (YDQ), 206–208 (YDQ), 211–213 (YDQ), 221–223 (YDQ), 226–228 (YDQ), 235–237 (YDQ), 249–251 (YDQ), 288–290 (PVV), 310–319 (VEPTPTPVVE), 312–315 (PTPT), 316–318 (PVV), 322–324 (PVV), 330–339 (VEPTPTPVVE), 332–335 (PTPT), 336–338 (PVV), 354–358 (PQPTP), 385–389 (PTPVP), 396–400 (PQPTP), 402–404 (PVV), 413–415 (PVV), 424–428 (PTPAP), and 454–456 (PVV). The tract at residues 98 to 251 (YDQVNNTFYD…NAYNTQNYDQ (154 aa)) is 9 X 3 AA repeats OF Y-D-Q. The interval 160–456 (PVVDPDATPE…QTTPAVPPVV (297 aa)) is 8 X 3 AA repeats of P-V-V. The tract at residues 177 to 197 (GLDPLPQAPDEYQDTTAPPAY) is disordered. Positions 310–339 (VEPTPTPVVETAPVVEAPKVVEPTPTPVVE) are 2 X 10 AA repeats of V-E-P-T-P-T-P-V-V-E. The segment at 312–428 (PTPTPVVETA…PKVVTPTPAP (117 aa)) is 6 X 5 AA repeats of P-X-P-X-P.

It localises to the cell projection. Its subcellular location is the attachment organelle membrane. In terms of biological role, component of the cytoskeleton-like structure which stabilizes the shape of the wall-less mycoplasma. This cytoskeleton-like network of accessory proteins containing HMW proteins 1 to 5 allows the proper anchoring of cytadhesin proteins in the mycoplasmal membrane at the attachment organelle. Essential for successful surface parasitism. This chain is Cytadherence high molecular weight protein 3 (hmw3), found in Mycoplasma pneumoniae (strain ATCC 29342 / M129 / Subtype 1) (Mycoplasmoides pneumoniae).